The chain runs to 158 residues: Transcription elongation factor GreA (158 aa).

Residues 3–75 are a coiled coil; that stretch reads TEKTYPMTQE…TQLENMIRNA (73 aa).

The protein belongs to the GreA/GreB family.

In terms of biological role, necessary for efficient RNA polymerase transcription elongation past template-encoded arresting sites. The arresting sites in DNA have the property of trapping a certain fraction of elongating RNA polymerases that pass through, resulting in locked ternary complexes. Cleavage of the nascent transcript by cleavage factors such as GreA or GreB allows the resumption of elongation from the new 3'terminus. GreA releases sequences of 2 to 3 nucleotides. The chain is Transcription elongation factor GreA from Bacillus cereus (strain ATCC 14579 / DSM 31 / CCUG 7414 / JCM 2152 / NBRC 15305 / NCIMB 9373 / NCTC 2599 / NRRL B-3711).